The primary structure comprises 368 residues: E3 ubiquitin-protein ligase makorin (368 aa).

2 consecutive C3H1-type zinc fingers follow at residues S2–N29 and D30–V57. Positions S58 to P81 are disordered. Low complexity predominate over residues S69–S78. Residues P147 to L174 form a C3H1-type 3 zinc finger. The tract at residues C175–H202 is makorin-type Cys-His. Residues C216–R274 form an RING-type zinc finger. The C3H1-type 4 zinc finger occupies K303–R332.

In terms of tissue distribution, expressed in primary roots and leaves. Detected in vascular bundle tissues.

The enzyme catalyses S-ubiquitinyl-[E2 ubiquitin-conjugating enzyme]-L-cysteine + [acceptor protein]-L-lysine = [E2 ubiquitin-conjugating enzyme]-L-cysteine + N(6)-ubiquitinyl-[acceptor protein]-L-lysine.. The protein operates within protein modification; protein ubiquitination. E3 ubiquitin ligase catalyzing the covalent attachment of ubiquitin moieties onto substrate proteins. In Oryza sativa subsp. japonica (Rice), this protein is E3 ubiquitin-protein ligase makorin (MKRN).